Reading from the N-terminus, the 301-residue chain is Phospholipase A1 (301 aa).

The cysteines at positions 4 and 87 are disulfide-linked. Ser137 serves as the catalytic Nucleophile. Asp165 (charge relay system) is an active-site residue. 2 disulfides stabilise this stretch: Cys176-Cys181 and Cys219-Cys228. His230 acts as the Charge relay system in catalysis. Intrachain disulfides connect Cys245-Cys269, Cys246-Cys294, and Cys262-Cys267.

This sequence belongs to the AB hydrolase superfamily. Lipase family. Expressed by the venom gland.

It is found in the secreted. It carries out the reaction a 1,2-diacyl-sn-glycero-3-phosphocholine + H2O = a 2-acyl-sn-glycero-3-phosphocholine + a fatty acid + H(+). In terms of biological role, catalyzes the hydrolysis of phosphatidylcholine with phospholipase A1 activity. May act as an allergen and induce hemolytic activity. The chain is Phospholipase A1 from Vespa crabro (European hornet).